The primary structure comprises 644 residues: Zinc finger protein 74 (644 aa).

The 72-residue stretch at 43-114 folds into the KRAB domain; the sequence is VSFKDVAVDF…QREVPRGPCP (72 aa). 12 consecutive C2H2-type zinc fingers follow at residues 248 to 270, 276 to 298, 304 to 326, 332 to 354, 360 to 382, 388 to 410, 416 to 438, 444 to 466, 472 to 494, 500 to 522, 528 to 550, and 556 to 578; these read FVCG…RRWH, YKCD…RRIH, FFCG…QRIH, YKCS…LRVH, YRCG…HRIH, YQCG…EKIH, FKCS…QRTH, FKCA…RRIH, FKCN…RRIH, FDCS…QRIH, YKCS…QKIH, and FKCE…QRLH. K582 participates in a covalent cross-link: Glycyl lysine isopeptide (Lys-Gly) (interchain with G-Cter in SUMO2).

The protein belongs to the krueppel C2H2-type zinc-finger protein family. As to expression, highly expressed in the fetal brain.

It is found in the nucleus. Its function is as follows. May play a role in RNA metabolism. The sequence is that of Zinc finger protein 74 (ZNF74) from Homo sapiens (Human).